The sequence spans 646 residues: MAPGQRLVLCEETVRERSGLGPHRDLAELRSLSIPGTYQEKITHLGNSLMHLTALKSLDLSRNSLVSLEGIQYLVSLESLNLYYNCISSLAEVFRLHTLLELQDVDFRLNPVVKNESDYRLFVVHMLPKLRQLDDRPVRESERKASQLHFAPEDSLNSKENFSTTLTVGRPHHLRNRCTETSAKKCLVMDADDEAVLNLIAECEWDLSNPPGNMSSSQKEHEADLHYAQESRHLLSPLSIQHQCGDSARRGHEKKKVTSRGCPGHSPQDQLCGELPLQHGLPEACHMHVQHARITSQPDSVDVEDCASSAQKSSLSSQKTVNPLPVPEKYRKRRMPGGRFQVPSDRECLSFLERADGPSSLEDSLSRQDGLEGQSQVALSHSEALEAEERTSHGTSDPRVLSPKLCSAAVPERRSTLEVALLEALLDLIDRCSSGSGSLHGNEAFLAQAKHVLSSLQEFTATRDSSALEKEGIGYLSLENKTLQSRLAEQQQQYTATVTKMTAELNNTKRELDTLRQHLDKSLEENSHLKSLLYNVKKEVKTADTSTALTLQITGLQASMKQLSGEVVELKQHVEHYDKIQELTQMLQESHSSLVSTNEHLLQELSRTRAQHRAEVEQMRWSFQEFKKTTALIPHRSSRRGGRQSC.

3 LRR repeats span residues 28–49, 54–75, and 76–97; these read ELRSLSIPGTYQEKITHLGNSL, ALKSLDLSRNSLVSLEGIQYLV, and SLESLNLYYNCISSLAEVFRLH. Residues 110–149 enclose the LRRCT domain; it reads NPVVKNESDYRLFVVHMLPKLRQLDDRPVRESERKASQLH. 2 positions are modified to phosphoserine: Ser117 and Ser236. Disordered stretches follow at residues 300–342 and 357–399; these read SVDV…RFQV and GPSS…SDPR. Over residues 307 to 319 the composition is skewed to low complexity; the sequence is ASSAQKSSLSSQK. The residue at position 380 (Ser380) is a Phosphoserine. A compositionally biased stretch (basic and acidic residues) spans 383–392; that stretch reads EALEAEERTS. Residue Ser402 is modified to Phosphoserine. Residues 476–622 adopt a coiled-coil conformation; sequence LSLENKTLQS…RAEVEQMRWS (147 aa).

This sequence belongs to the CEP72 family. In terms of assembly, interacts with KIZ, PCM1 and CDK5RAP2.

It is found in the cytoplasm. It localises to the cytoskeleton. Its subcellular location is the microtubule organizing center. The protein resides in the centrosome. The protein localises to the centriolar satellite. In terms of biological role, involved in the recruitment of key centrosomal proteins to the centrosome. Provides centrosomal microtubule-nucleation activity on the gamma-tubulin ring complexes (gamma-TuRCs) and has critical roles in forming a focused bipolar spindle, which is needed for proper tension generation between sister chromatids. Required for localization of KIZ, AKAP9 and gamma-tubulin ring complexes (gamma-TuRCs). Involved in centriole duplication. Required for CDK5RAP22, CEP152, WDR62 and CEP63 centrosomal localization and promotes the centrosomal localization of CDK2. The polypeptide is Centrosomal protein of 72 kDa (Cep72) (Mus musculus (Mouse)).